The sequence spans 251 residues: 1-(5-phosphoribosyl)-5-[(5-phosphoribosylamino)methylideneamino] imidazole-4-carboxamide isomerase (251 aa).

The active-site Proton acceptor is the Asp7. The active-site Proton donor is the Asp131.

It belongs to the HisA/HisF family.

Its subcellular location is the cytoplasm. The enzyme catalyses 1-(5-phospho-beta-D-ribosyl)-5-[(5-phospho-beta-D-ribosylamino)methylideneamino]imidazole-4-carboxamide = 5-[(5-phospho-1-deoxy-D-ribulos-1-ylimino)methylamino]-1-(5-phospho-beta-D-ribosyl)imidazole-4-carboxamide. It functions in the pathway amino-acid biosynthesis; L-histidine biosynthesis; L-histidine from 5-phospho-alpha-D-ribose 1-diphosphate: step 4/9. The sequence is that of 1-(5-phosphoribosyl)-5-[(5-phosphoribosylamino)methylideneamino] imidazole-4-carboxamide isomerase from Blochmanniella floridana.